Here is a 148-residue protein sequence, read N- to C-terminus: Lysozyme-like protein 6 (148 aa).

The first 19 residues, 1 to 19, serve as a signal peptide directing secretion; that stretch reads MTSPLLISLASCLVAVNQA. Residues 20-148 enclose the C-type lysozyme domain; it reads SLIGRCDLAK…SYWMTGCHLA (129 aa). 4 disulfide bridges follow: Cys-25–Cys-145, Cys-49–Cys-133, Cys-83–Cys-98, and Cys-94–Cys-112. Active-site residues include Glu-54 and Asp-71.

This sequence belongs to the glycosyl hydrolase 22 family. As to quaternary structure, monomer.

The protein localises to the secreted. Its subcellular location is the cell surface. It localises to the cell projection. The protein resides in the cilium. It is found in the flagellum. It catalyses the reaction Hydrolysis of (1-&gt;4)-beta-linkages between N-acetylmuramic acid and N-acetyl-D-glucosamine residues in a peptidoglycan and between N-acetyl-D-glucosamine residues in chitodextrins.. May be involved sperm-egg plasma membrane adhesion and fusion during fertilization. Exhibits bacteriolytic activity in vitro against Micrococcus luteus and Staphylococcus aureus. Shows weak bacteriolytic activity against Gram-positive bacteria at physiological pH. Bacteriolytic activity is pH-dependent, with a maximum at around pH 5.6. The chain is Lysozyme-like protein 6 (LYZL6) from Bos taurus (Bovine).